The primary structure comprises 422 residues: ATP-dependent Clp protease ATP-binding subunit ClpX 1 (422 aa).

In terms of domain architecture, ClpX-type ZB spans 4-57 (DRKNRESGKLLYCSFCGKSQHEVRKLIAGPAVFVCDECVELCNDIIREDLQGSE). Positions 16, 19, 38, and 41 each coordinate Zn(2+). 120-127 (PTGSGKTL) contributes to the ATP binding site.

The protein belongs to the ClpX chaperone family. In terms of assembly, component of the ClpX-ClpP complex. Forms a hexameric ring that, in the presence of ATP, binds to fourteen ClpP subunits assembled into a disk-like structure with a central cavity, resembling the structure of eukaryotic proteasomes.

Functionally, ATP-dependent specificity component of the Clp protease. It directs the protease to specific substrates. Can perform chaperone functions in the absence of ClpP. The polypeptide is ATP-dependent Clp protease ATP-binding subunit ClpX 1 (Methylococcus capsulatus (strain ATCC 33009 / NCIMB 11132 / Bath)).